Consider the following 382-residue polypeptide: Galactokinase (382 aa).

34–37 is a binding site for substrate; sequence EHTD. 124 to 130 provides a ligand contact to ATP; the sequence is GAGLSSS. The Mg(2+) site is built by S130 and E162. D174 (proton acceptor) is an active-site residue. Y223 lines the substrate pocket.

This sequence belongs to the GHMP kinase family. GalK subfamily.

The protein resides in the cytoplasm. It catalyses the reaction alpha-D-galactose + ATP = alpha-D-galactose 1-phosphate + ADP + H(+). Its pathway is carbohydrate metabolism; galactose metabolism. In terms of biological role, catalyzes the transfer of the gamma-phosphate of ATP to D-galactose to form alpha-D-galactose-1-phosphate (Gal-1-P). This Escherichia coli O127:H6 (strain E2348/69 / EPEC) protein is Galactokinase.